Here is a 96-residue protein sequence, read N- to C-terminus: Large ribosomal subunit protein bL28 (96 aa).

The protein belongs to the bacterial ribosomal protein bL28 family.

This Leptospira biflexa serovar Patoc (strain Patoc 1 / Ames) protein is Large ribosomal subunit protein bL28.